A 650-amino-acid polypeptide reads, in one-letter code: Glycoprotein antigen BM86 (650 aa).

The N-terminal stretch at 1–19 is a signal peptide; the sequence is MRGIALFVAAVSLIVEGTA. 2 EGF-like domains span residues 20-66 and 67-104; these read ESSI…KQCE and YKDTCKTRECSYGRCVESNPSKASCVCEASDDLTLQCK. Intrachain disulfides connect cysteine 24/cysteine 37, cysteine 32/cysteine 49, cysteine 51/cysteine 65, cysteine 71/cysteine 81, cysteine 76/cysteine 91, and cysteine 93/cysteine 103. Residues asparagine 141 and asparagine 182 are each glycosylated (N-linked (GlcNAc...) asparagine). EGF-like domains lie at 205-247, 251-292, and 291-335; these read CINA…ITCK, HTVS…DTCI, and CISD…NECL. Disulfide bonds link cysteine 209–cysteine 222, cysteine 218–cysteine 231, cysteine 233–cysteine 246, cysteine 255–cysteine 269, cysteine 263–cysteine 278, cysteine 280–cysteine 291, cysteine 295–cysteine 307, cysteine 300–cysteine 316, and cysteine 318–cysteine 334. 2 N-linked (GlcNAc...) asparagine glycosylation sites follow: asparagine 348 and asparagine 382. EGF-like domains are found at residues 482-530 and 531-568; these read RRSV…IGCI and ERTTCNPKEIQECQDKKLECVYKNHKAECECPDDHECY. Disulfide bonds link cysteine 486/cysteine 500, cysteine 492/cysteine 516, cysteine 518/cysteine 529, cysteine 535/cysteine 550, cysteine 543/cysteine 559, and cysteine 561/cysteine 567. Residues 603-628 are disordered; that stretch reads KSEATTAATTTTKAKDKDPDPGKSSA. Serine 627 carries the GPI-anchor amidated serine lipid modification. Positions 628–650 are cleaved as a propeptide — removed in mature form; the sequence is AAAVSATGLLLLLAATSVTAASL.

Its subcellular location is the cell membrane. The sequence is that of Glycoprotein antigen BM86 from Rhipicephalus microplus (Cattle tick).